A 426-amino-acid polypeptide reads, in one-letter code: Dihydroorotase (426 aa).

Residues H58 and H60 each contribute to the Zn(2+) site. Substrate contacts are provided by residues 60 to 62 (HLR) and N92. D150, H177, and H230 together coordinate Zn(2+). N276 provides a ligand contact to substrate. A Zn(2+)-binding site is contributed by D303. The active site involves D303. H307 lines the substrate pocket.

Belongs to the metallo-dependent hydrolases superfamily. DHOase family. Class I DHOase subfamily. The cofactor is Zn(2+).

It carries out the reaction (S)-dihydroorotate + H2O = N-carbamoyl-L-aspartate + H(+). It participates in pyrimidine metabolism; UMP biosynthesis via de novo pathway; (S)-dihydroorotate from bicarbonate: step 3/3. Its function is as follows. Catalyzes the reversible cyclization of carbamoyl aspartate to dihydroorotate. The chain is Dihydroorotase from Acetivibrio thermocellus (strain ATCC 27405 / DSM 1237 / JCM 9322 / NBRC 103400 / NCIMB 10682 / NRRL B-4536 / VPI 7372) (Clostridium thermocellum).